A 438-amino-acid polypeptide reads, in one-letter code: 3-phosphoshikimate 1-carboxyvinyltransferase 1 (438 aa).

The 3-phosphoshikimate site is built by Lys30, Ser31, and Arg35. Residue Lys30 participates in phosphoenolpyruvate binding. Gly104 and Arg132 together coordinate phosphoenolpyruvate. Residues Ser178, Ser179, Gln180, Ser207, Glu326, and His353 each contribute to the 3-phosphoshikimate site. Gln180 contributes to the phosphoenolpyruvate binding site. The active-site Proton acceptor is the Glu326. Residues Arg357, Arg398, and Lys423 each contribute to the phosphoenolpyruvate site.

It belongs to the EPSP synthase family. Monomer.

It localises to the cytoplasm. The enzyme catalyses 3-phosphoshikimate + phosphoenolpyruvate = 5-O-(1-carboxyvinyl)-3-phosphoshikimate + phosphate. It participates in metabolic intermediate biosynthesis; chorismate biosynthesis; chorismate from D-erythrose 4-phosphate and phosphoenolpyruvate: step 6/7. In terms of biological role, catalyzes the transfer of the enolpyruvyl moiety of phosphoenolpyruvate (PEP) to the 5-hydroxyl of shikimate-3-phosphate (S3P) to produce enolpyruvyl shikimate-3-phosphate and inorganic phosphate. This is 3-phosphoshikimate 1-carboxyvinyltransferase 1 from Streptomyces coelicolor (strain ATCC BAA-471 / A3(2) / M145).